The chain runs to 666 residues: Adenylylsulfate reductase subunit alpha (666 aa).

FAD is bound by residues 32–35, 60–61, 67–69, N78, I193, S259, S417, 461–462, and S472; these read GGMG, DK, SGA, and AD.

This sequence belongs to the FAD-dependent oxidoreductase 2 family. As to quaternary structure, heterodimer composed of AprA and AprB. The heterodimers can dimerize to form heterotetramers. FAD serves as cofactor.

Its subcellular location is the cytoplasm. It carries out the reaction sulfite + A + AMP + 2 H(+) = adenosine 5'-phosphosulfate + AH2. Its function is as follows. Catalytic subunit of the adenylylsulfate reductase which catalyzes reversibly the reduction of adenosine 5'-phosphosulfate (APS) to sulfite and AMP during dissimilatory sulfate reduction. This Megalodesulfovibrio gigas (strain ATCC 19364 / DSM 1382 / NCIMB 9332 / VKM B-1759) (Desulfovibrio gigas) protein is Adenylylsulfate reductase subunit alpha.